The following is a 240-amino-acid chain: MSDIKDGNNDHLVQSDDPEHPANLIPALCRNFYSHGWVTGTGGGASIKRDNHIFIAPSGVQKELIQPHNIFVLSFPTPKYPPSARQYIRKPLKLNPSACTPLFLAAFERGAGCCIHTHSQWAVLVTLLVEREKGPEGCFEISNIEQIKGIPRGKGKGMMGFFDTLKIPIIENTAFEEDLTQSLEEAMEMYPDTYAVLVRRHGIYVWGDDVAKAKTQCESLDYLFQLAVEMHRLGLPWVKS.

Residue Cys99 coordinates substrate. Zn(2+) is bound by residues His116 and His118. Glu145 (proton donor/acceptor) is an active-site residue. Residue His201 participates in Zn(2+) binding.

This sequence belongs to the aldolase class II family. MtnB subfamily. It depends on Zn(2+) as a cofactor.

It localises to the cytoplasm. It catalyses the reaction 5-(methylsulfanyl)-D-ribulose 1-phosphate = 5-methylsulfanyl-2,3-dioxopentyl phosphate + H2O. Its pathway is amino-acid biosynthesis; L-methionine biosynthesis via salvage pathway; L-methionine from S-methyl-5-thio-alpha-D-ribose 1-phosphate: step 2/6. In terms of biological role, catalyzes the dehydration of methylthioribulose-1-phosphate (MTRu-1-P) into 2,3-diketo-5-methylthiopentyl-1-phosphate (DK-MTP-1-P). This chain is Methylthioribulose-1-phosphate dehydratase, found in Paracoccidioides lutzii (strain ATCC MYA-826 / Pb01) (Paracoccidioides brasiliensis).